The sequence spans 460 residues: ATP synthase subunit beta (460 aa).

ATP is bound at residue 150–157 (GGAGVGKT).

This sequence belongs to the ATPase alpha/beta chains family. As to quaternary structure, F-type ATPases have 2 components, CF(1) - the catalytic core - and CF(0) - the membrane proton channel. CF(1) has five subunits: alpha(3), beta(3), gamma(1), delta(1), epsilon(1). CF(0) has three main subunits: a(1), b(2) and c(9-12). The alpha and beta chains form an alternating ring which encloses part of the gamma chain. CF(1) is attached to CF(0) by a central stalk formed by the gamma and epsilon chains, while a peripheral stalk is formed by the delta and b chains.

It is found in the cell inner membrane. The catalysed reaction is ATP + H2O + 4 H(+)(in) = ADP + phosphate + 5 H(+)(out). Functionally, produces ATP from ADP in the presence of a proton gradient across the membrane. The catalytic sites are hosted primarily by the beta subunits. The polypeptide is ATP synthase subunit beta (Edwardsiella ictaluri (strain 93-146)).